Consider the following 383-residue polypeptide: GTPase-interacting component 2 (383 aa).

Residues 63–106 (SNKKNIELPPLSPNSHPSCHHRRSNSNSAKSKESSSSSSSANKT) are disordered. Over residues 87-105 (NSNSAKSKESSSSSSSANK) the composition is skewed to low complexity. The 14-residue stretch at 134 to 147 (ISTPFDFQHISHAD) folds into the CRIB domain. Positions 155 to 165 (EQLQEPSSLST) are enriched in polar residues. The interval 155–189 (EQLQEPSSLSTEIKDDYTSSSSKRDSKSLNKAFVT) is disordered. A compositionally biased stretch (basic and acidic residues) spans 166–182 (EIKDDYTSSSSKRDSKS). A phosphoserine mark is found at S254, S258, S337, S345, and S367. The disordered stretch occupies residues 319 to 361 (ETPNSNKDSAKAFFPSRQSPLPKRRNSIATPSPQSKFSYSDSP). The segment covering 345 to 361 (SIATPSPQSKFSYSDSP) has biased composition (polar residues).

Belongs to the BORG/CEP family. Interacts with GTP-bound CDC42.

The protein localises to the bud neck. It localises to the bud tip. Its subcellular location is the cytoplasm. It is found in the cell cortex. The protein resides in the cytoskeleton. Required for cell size and shape control, bud site selection, bud emergence, actin cytoskeletal organization, mitotic spindle orientation/positioning, and mating projection formation in response to mating pheromone. This is GTPase-interacting component 2 (GIC2) from Saccharomyces cerevisiae (strain ATCC 204508 / S288c) (Baker's yeast).